We begin with the raw amino-acid sequence, 594 residues long: Amino-acid permease 1 (594 aa).

Transmembrane regions (helical) follow at residues 75–95 (QMIA…GKSL), 101–121 (GSLM…ILSL), 146–166 (IGFA…PSEI), 181–201 (LNPA…NAFG), 210–230 (FVSS…AIII), 297–317 (VFYR…LVVP), 323–343 (LGNV…VLPH), 344–364 (ITNA…VFAA), 390–410 (PVIS…NAAP), 416–436 (FDWL…LSFI), 468–488 (YGVL…IFPV), and 498–518 (FFVS…SPIF). Residues 550–587 (TSELSEKDLTKPNLQSNDNKNSEDLESNTPPQKKSALQ) form a disordered region.

Belongs to the amino acid-polyamine-organocation (APC) superfamily.

Its subcellular location is the membrane. The chain is Amino-acid permease 1 (aap1) from Schizosaccharomyces pombe (strain 972 / ATCC 24843) (Fission yeast).